The following is a 495-amino-acid chain: Taxoid 2-alpha-hydroxylase (495 aa).

Residues Leu17–Leu37 form a helical membrane-spanning segment. Position 441 (Cys441) interacts with heme.

Belongs to the cytochrome P450 family.

It localises to the microsome membrane. The catalysed reaction is taxusin + reduced [NADPH--hemoprotein reductase] + O2 = 2alpha-hydroxytaxusin + oxidized [NADPH--hemoprotein reductase] + H2O + H(+). It catalyses the reaction 7beta-hydroxytaxusin + reduced [NADPH--hemoprotein reductase] + O2 = 2alpha,7beta-dihydroxytaxusin + oxidized [NADPH--hemoprotein reductase] + H2O + H(+). It functions in the pathway alkaloid biosynthesis; taxol biosynthesis. In terms of biological role, catalyzes the conversion of taxusin to 2-alpha-hydroxytaxusin in taxol biosynthesis. Catalyzes the conversion of 7-beta-hydroxytaxusin to 2-alpha-7-beta-hydroxytaxusin in taxol biosynthesis. The polypeptide is Taxoid 2-alpha-hydroxylase (Taxus canadensis (Canadian yew)).